The primary structure comprises 460 residues: Bifunctional protein GlmU (460 aa).

Residues Met-1 to Leu-228 form a pyrophosphorylase region. Residues Leu-8 to Gly-11, Lys-22, Gln-72, and Gly-77 to Thr-78 each bind UDP-N-acetyl-alpha-D-glucosamine. Asp-102 is a binding site for Mg(2+). Residues Gly-139, Glu-154, Asn-169, and Asn-226 each contribute to the UDP-N-acetyl-alpha-D-glucosamine site. Asn-226 contacts Mg(2+). The tract at residues Tyr-229–Asn-249 is linker. An N-acetyltransferase region spans residues Gly-250–Glu-460. Positions 331 and 349 each coordinate UDP-N-acetyl-alpha-D-glucosamine. The active-site Proton acceptor is the His-361. Tyr-364 and Asn-375 together coordinate UDP-N-acetyl-alpha-D-glucosamine. Residues Asn-384–Tyr-385, Ala-421, and Arg-438 each bind acetyl-CoA.

It in the N-terminal section; belongs to the N-acetylglucosamine-1-phosphate uridyltransferase family. This sequence in the C-terminal section; belongs to the transferase hexapeptide repeat family. In terms of assembly, homotrimer. Mg(2+) is required as a cofactor.

It localises to the cytoplasm. It catalyses the reaction alpha-D-glucosamine 1-phosphate + acetyl-CoA = N-acetyl-alpha-D-glucosamine 1-phosphate + CoA + H(+). The enzyme catalyses N-acetyl-alpha-D-glucosamine 1-phosphate + UTP + H(+) = UDP-N-acetyl-alpha-D-glucosamine + diphosphate. The protein operates within nucleotide-sugar biosynthesis; UDP-N-acetyl-alpha-D-glucosamine biosynthesis; N-acetyl-alpha-D-glucosamine 1-phosphate from alpha-D-glucosamine 6-phosphate (route II): step 2/2. It participates in nucleotide-sugar biosynthesis; UDP-N-acetyl-alpha-D-glucosamine biosynthesis; UDP-N-acetyl-alpha-D-glucosamine from N-acetyl-alpha-D-glucosamine 1-phosphate: step 1/1. Its pathway is bacterial outer membrane biogenesis; LPS lipid A biosynthesis. Functionally, catalyzes the last two sequential reactions in the de novo biosynthetic pathway for UDP-N-acetylglucosamine (UDP-GlcNAc). The C-terminal domain catalyzes the transfer of acetyl group from acetyl coenzyme A to glucosamine-1-phosphate (GlcN-1-P) to produce N-acetylglucosamine-1-phosphate (GlcNAc-1-P), which is converted into UDP-GlcNAc by the transfer of uridine 5-monophosphate (from uridine 5-triphosphate), a reaction catalyzed by the N-terminal domain. This chain is Bifunctional protein GlmU, found in Acholeplasma laidlawii (strain PG-8A).